A 718-amino-acid chain; its full sequence is U-box domain-containing protein 5 (718 aa).

The U-box domain occupies 218–292; the sequence is TLPEKFKCTL…SEWCAKNGLD (75 aa). ARM repeat units lie at residues 493 to 532, 534 to 571, and 573 to 613; these read PHGPSKITSSGSLSSLLKIVESQAEHLQEQAMITLKNLSS, MEICLEMVSLDFIQKLTSFLQQKVFCKHSIIILKNLCS, and EKGR…QLCV. Residues 662–704 are disordered; the sequence is KEEEEEVSSRPEGRTTASPTSQVVTPVTHPEPVKITPSPKKSG. Polar residues predominate over residues 676–686; sequence TTASPTSQVVT.

It catalyses the reaction S-ubiquitinyl-[E2 ubiquitin-conjugating enzyme]-L-cysteine + [acceptor protein]-L-lysine = [E2 ubiquitin-conjugating enzyme]-L-cysteine + N(6)-ubiquitinyl-[acceptor protein]-L-lysine.. Its pathway is protein modification; protein ubiquitination. In terms of biological role, functions as an E3 ubiquitin ligase. This chain is U-box domain-containing protein 5 (PUB5), found in Arabidopsis thaliana (Mouse-ear cress).